The sequence spans 197 residues: Imidazoleglycerol-phosphate dehydratase (197 aa).

This sequence belongs to the imidazoleglycerol-phosphate dehydratase family.

It is found in the cytoplasm. It carries out the reaction D-erythro-1-(imidazol-4-yl)glycerol 3-phosphate = 3-(imidazol-4-yl)-2-oxopropyl phosphate + H2O. The protein operates within amino-acid biosynthesis; L-histidine biosynthesis; L-histidine from 5-phospho-alpha-D-ribose 1-diphosphate: step 6/9. This chain is Imidazoleglycerol-phosphate dehydratase, found in Alkalilimnicola ehrlichii (strain ATCC BAA-1101 / DSM 17681 / MLHE-1).